Consider the following 243-residue polypeptide: Sec-independent protein translocase protein TatC (243 aa).

A run of 7 helical transmembrane segments spans residues 18–38 (VIII…NYVD), 70–90 (IAII…IWSF), 106–126 (MIPV…FTVF), 132–152 (FLLQ…KYIS), 153–173 (FALN…VVYI), 191–211 (YALL…DVIS), and 213–233 (LLMA…AKFI).

It belongs to the TatC family. Forms a complex with TatA.

It localises to the cell membrane. Part of the twin-arginine translocation (Tat) system that transports large folded proteins containing a characteristic twin-arginine motif in their signal peptide across membranes. The protein is Sec-independent protein translocase protein TatC of Carboxydothermus hydrogenoformans (strain ATCC BAA-161 / DSM 6008 / Z-2901).